The following is an 829-amino-acid chain: Probable beta-glucosidase H (829 aa).

Asn-13 carries an N-linked (GlcNAc...) asparagine glycan. Asp-225 is an active-site residue. N-linked (GlcNAc...) asparagine glycans are attached at residues Asn-304, Asn-473, Asn-602, Asn-627, Asn-664, and Asn-749. The PA14 domain maps to 389 to 548 (RMLSNAVIHF…DPEQMVANAV (160 aa)).

The protein belongs to the glycosyl hydrolase 3 family.

Its subcellular location is the secreted. The catalysed reaction is Hydrolysis of terminal, non-reducing beta-D-glucosyl residues with release of beta-D-glucose.. It functions in the pathway glycan metabolism; cellulose degradation. Its function is as follows. Beta-glucosidases are one of a number of cellulolytic enzymes involved in the degradation of cellulosic biomass. Catalyzes the last step releasing glucose from the inhibitory cellobiose. This chain is Probable beta-glucosidase H (bglH), found in Aspergillus fumigatus (strain CBS 144.89 / FGSC A1163 / CEA10) (Neosartorya fumigata).